A 960-amino-acid polypeptide reads, in one-letter code: Putative helicase L207/L206 (960 aa).

Positions 1 to 32 (MTSKTENKKSVSSKTGRTTNNSTNKKTTEKSV) are disordered. Residues 12-25 (SSKTGRTTNNSTNK) show a composition bias toward low complexity. The 162-residue stretch at 646-807 (SMREYILTLL…FIKHSEATKK (162 aa)) folds into the SF3 helicase domain.

In Acanthamoeba polyphaga mimivirus (APMV), this protein is Putative helicase L207/L206.